Reading from the N-terminus, the 456-residue chain is 3-isopropylmalate dehydratase large subunit (456 aa).

The [4Fe-4S] cluster site is built by Cys-336, Cys-396, and Cys-399.

It belongs to the aconitase/IPM isomerase family. LeuC type 1 subfamily. Heterodimer of LeuC and LeuD. It depends on [4Fe-4S] cluster as a cofactor.

It catalyses the reaction (2R,3S)-3-isopropylmalate = (2S)-2-isopropylmalate. It participates in amino-acid biosynthesis; L-leucine biosynthesis; L-leucine from 3-methyl-2-oxobutanoate: step 2/4. In terms of biological role, catalyzes the isomerization between 2-isopropylmalate and 3-isopropylmalate, via the formation of 2-isopropylmaleate. The chain is 3-isopropylmalate dehydratase large subunit from Staphylococcus epidermidis (strain ATCC 35984 / DSM 28319 / BCRC 17069 / CCUG 31568 / BM 3577 / RP62A).